The chain runs to 295 residues: Trimeric intracellular cation channel type 1B.1 (295 aa).

Residues 1–27 lie on the Lumenal side of the membrane; it reads MVVPESFQLDQEILLDAGAQLHRLKMY. Residues 28-45 form a helical membrane-spanning segment; sequence PYFDVAHYLLMIIEVRDD. The Cytoplasmic portion of the chain corresponds to 46–56; sequence LGSAASIFSRK. The chain crosses the membrane as a discontinuously helical span at residues 57–80; sequence HPLSCWLSSMLMCFADAFLANFLL. Residues 81–89 are Lumenal-facing; it reads GEPVIAPFK. A helical membrane pass occupies residues 90 to 107; the sequence is RHDDIILATIIWYLVFYA. Residues 108–119 lie on the Cytoplasmic side of the membrane; that stretch reads PFDGIYKIAKIT. The chain crosses the membrane as a helical span at residues 120–148; sequence PVKCVLAVMKEVKRAYKVSHGVSHAAKLY. Lysine 129 and arginine 133 together coordinate a 1,2-diacyl-sn-glycero-3-phospho-(1D-myo-inositol-4,5-bisphosphate). The Lumenal segment spans residues 149-150; sequence PN. A discontinuously helical membrane pass occupies residues 151–177; the sequence is SYIVQVLVGTAKGAGSGIVRTLEQLVR. Serine 166 contributes to the a 1,2-diacyl-sn-glycero-3-phospho-(1D-myo-inositol-4,5-bisphosphate) binding site. Topologically, residues 178-188 are cytoplasmic; sequence GVWLPTHNELL. A helical transmembrane segment spans residues 189 to 210; sequence RPSFATKACVVAASVLALEKSG. At 211 to 215 the chain is on the lumenal side; that stretch reads TYLTA. A helical membrane pass occupies residues 216-239; sequence PHDLVYLVIVGFFVYFKLSAVILH. Residues 240–295 are Cytoplasmic-facing; that stretch reads VTDPFAPIENLFCAIFMGGIWDAVSRALAASRDRRAAGAHSNENGSSISTPEKKDQ. Positions 274-295 are disordered; the sequence is RAAGAHSNENGSSISTPEKKDQ.

The protein belongs to the TMEM38 family. Homotrimer; trimerization probably requires binding to phosphatidylinositol 4,5-bisphosphate (PIP2).

It is found in the endoplasmic reticulum membrane. Its function is as follows. Potassium channel that mediates transmembrane potassium transport. Might be required for maintenance of rapid intracellular calcium release. May act as a counter-ion channel that functions in synchronization with calcium release from intracellular stores. Binds phosphatidylinositol 4,5-bisphosphate (PIP2). This is Trimeric intracellular cation channel type 1B.1 from Caenorhabditis elegans.